Consider the following 498-residue polypeptide: Aspartyl aminopeptidase (498 aa).

Residue His-91 participates in Zn(2+) binding. His-166 is a substrate binding site. Asp-274 serves as a coordination point for Zn(2+). Glu-311 lines the substrate pocket. Zn(2+) contacts are provided by Glu-312 and Asp-363. Substrate contacts are provided by Asp-363, His-366, Lys-391, and Tyr-398. Position 463 (His-463) interacts with Zn(2+).

The protein belongs to the peptidase M18 family. As to quaternary structure, tetrahedron-shaped homododecamer built from six homodimers. Requires Zn(2+) as cofactor. In terms of processing, the N-terminus is blocked.

It catalyses the reaction Release of an N-terminal aspartate or glutamate from a peptide, with a preference for aspartate.. Its activity is regulated as follows. Inhibited by zinc. Stimulated by calcium and bacitracin. This is Aspartyl aminopeptidase (dapA) from Aspergillus oryzae (strain ATCC 42149 / RIB 40) (Yellow koji mold).